Here is a 503-residue protein sequence, read N- to C-terminus: Mitochondrial antiviral-signaling protein (503 aa).

Residues 1–478 (MTFAEDKTYK…HCASSMPWAK (478 aa)) lie on the Cytoplasmic side of the membrane. Glycyl lysine isopeptide (Lys-Gly) (interchain with G-Cter in ubiquitin) cross-links involve residues K7 and K10. Positions 10–77 (KYIRDNHSKF…WVEVFIRALQ (68 aa)) constitute a CARD domain. The interval 10–77 (KYIRDNHSKF…WVEVFIRALQ (68 aa)) is required for interaction with NLRX1. Residue C79 is the site of S-palmitoyl cysteine attachment. The interval 119–202 (GPSAFAPGHN…HQEQEPELGG (84 aa)) is disordered. Positions 143–147 (PVQDT) are interaction with TRAF2. Over residues 145–166 (QDTQPPESPVENSEQLLQTNSG) the composition is skewed to polar residues. A phosphoserine mark is found at S152, S157, S172, S186, and S220. An interaction with TRAF6 1 region spans residues 153 to 158 (PVENSE). Residues 178–189 (PSPNQQALSPQP) show a composition bias toward polar residues. R234 carries the post-translational modification Asymmetric dimethylarginine. Residues S251 and S256 each carry the phosphoserine modification. Residue K302 forms a Glycyl lysine isopeptide (Lys-Gly) (interchain with G-Cter in ubiquitin) linkage. Residues 337-503 (PSRVPASVAK…MLYRSRRLAQ (167 aa)) form an interaction with DHX33 region. Positions 346–398 (KAPANTIPPERNSKQAKETPEGPATKVTTGGNQTGPNSSIRSLHSGPEMSKPG) are disordered. Residues 356 to 365 (RNSKQAKETP) are compositionally biased toward basic and acidic residues. Polar residues predominate over residues 371 to 387 (KVTTGGNQTGPNSSIRS). S384 carries the phosphoserine modification. The pLxIS motif signature appears at 415-418 (LAIS). S418 bears the Phosphoserine; by TBK1 mark. The segment at 431 to 436 (PEENEY) is interaction with TRAF6 2. Positions 446–466 (SPSADLLGSPEPLATQQPQEE) are disordered. Residues 479-496 (WLGATSALLAVFLAVMLY) form a helical membrane-spanning segment. The Mitochondrial intermembrane portion of the chain corresponds to 497-503 (RSRRLAQ).

Self-associates and polymerizes (via CARD domains) to form 400 nM long three-stranded helical filaments on mitochondria, filament nucleation requires interaction with RIGI whose CARD domains act as a template for filament assembly. Interacts with RIGI, IFIH1/MDA5, TRAF2, TRAF6 and C1QBP. May interact with FADD, RIPK1, IKBKE, CHUK and IKBKB. Interacts (when phosphorylated) with IRF3; following activation and phosphorylation on the pLxIS motif by TBK1, recruits IRF3. Interacts with NLRX1. Interaction with NLRX1 requires the CARD domain. Interacts with PSMA7. Interacts with TRAFD1. Interacts (via C-terminus) with PCBP2 in a complex containing MAVS/IPS1, PCBP2 and ITCH. Interacts with CYLD. Interacts with SRC. Interacts with DHX58/LGP2 and IKBKE. Interacts with STING1. Interacts with IFIT3 (via N-terminus). Interacts with TBK1 only in the presence of IFIT3. Interacts with TTLL12; the interaction prevents MAVS binding to TBK1 and IKBKE. Interacts with MUL1. Interacts with ANKRD17. Interacts with NDFIP1. Interacts with SMURF1; the interaction is mediated by NDFIP1 and leads to MAVS ubiquitination and degradation. Interacts (via C-terminus) with GPATCH3; the interaction is markedly increased upon viral infection. Directly interacts (via CARD domain) with ATG5 and ATG12, either as ATG5 and ATG12 monomers or as ATG12-ATG5 conjugates. Interacts with DHX33 (via the helicase C-terminal domain). Interacts with DDX3X (via C-terminus); this interaction may occur rapidly, but transiently after viral infection. The interaction with DDX3X potentiates MAVS-mediated IFNB induction. Conversely inhibition of this interaction prevents MAVS-mediated IFNB induction. Transiently interacts with TRAF3 early during viral infection. Interacts with CLPB. Interacts with TRAF3IP3. Interacts with TOMM70; the interaction is enhanced by virus infection. Interacts with ZNFX1. Interacts with DHX15. Interacts with N4BP3; this interaction promotes the polyubiquitination of MAVS. Interacts with TAX1BP1; this interaction induces MAVS polyubiquitination. Interacts with NLRP3; promoting NLRP3 recruitment to mitochondria and activation of the NLRP3 inflammasome. Interacts with ECSIT; this interaction bridges RIGI to the MAVS complex at the mitochondrion. Interacts with UBL7; this interaction promotes MAVS 'Lys-27'-linked ubiquitination leading to type I interferon production. Interacts (via transmembrane domain) with SMIM30/MAVI1 (via transmembrane domain); the interaction disrupts MAVS interaction with RIGI and inhibits MAVS aggregation, resulting in the repression of type I interferon signaling and innate immune responses. In terms of processing, following activation, phosphorylated by TBK1 at Ser-418 in the pLxIS motif. The phosphorylated pLxIS motif constitutes an IRF3-binding motif, leading to recruitment of the transcription factor IRF3 to induce type-I interferons and other cytokines. Ubiquitinated. Undergoes 'Lys-48'-linked polyubiquitination catalyzed by ITCH; ITCH-dependent polyubiquitination is mediated by the interaction with PCBP2 and leads to MAVS/IPS1 proteasomal degradation. Ubiquitinated by RNF125, leading to its degradation by the proteasome. Undergoes 'Lys-48'-linked ubiquitination catalyzed by SMURF1. Undergoes 'Lys-48'-linked ubiquitination catalyzed by MARCHF5 at Lys-7, leading to proteasomal degradation. Ubiquitinated via 'Lys-63'-linked ubiquitination at Lys-10 by TRIM31, promoting MAVS polymerization and formation of three-stranded helical filaments on mitochondria. Undergoes 'Lys-63'-linked ubiquitination leading to enhanced interaction between MAVS and TRAF2. Undergoes 'Lys-27'-linked ubiquitination by UBE2N and TRIM21 leading to enhanced interaction between MAVS and TBK1. Deubiquitinated by USP10 leading to attenuation of RIGI-mediated MAVS aggregation and production of type I interferon. Undergoes 'Lys-48'-linked polyubiquitination catalyzed by RNF115 leading to its degradation. Post-translationally, proteolytically cleaved by apoptotic caspases during apoptosis, leading to its inactivation. Cleavage by CASP3 during virus-induced apoptosis inactivates it, preventing cytokine overproduction. In terms of processing, palmitoylated by ZHDDC4. Palmitoylation promotes MAVS stabilization and activation by inhibiting 'Lys-48'- but facilitating 'Lys-63'-linked ubiquitination.

It localises to the mitochondrion outer membrane. The protein localises to the mitochondrion. The protein resides in the peroxisome. In terms of biological role, adapter required for innate immune defense against viruses. Acts downstream of DHX33, RIGI and IFIH1/MDA5, which detect intracellular dsRNA produced during viral replication, to coordinate pathways leading to the activation of NF-kappa-B, IRF3 and IRF7, and to the subsequent induction of antiviral cytokines such as IFN-beta and RANTES (CCL5). Peroxisomal and mitochondrial MAVS act sequentially to create an antiviral cellular state. Upon viral infection, peroxisomal MAVS induces the rapid interferon-independent expression of defense factors that provide short-term protection, whereas mitochondrial MAVS activates an interferon-dependent signaling pathway with delayed kinetics, which amplifies and stabilizes the antiviral response. May activate the same pathways following detection of extracellular dsRNA by TLR3. May protect cells from apoptosis. Involved in NLRP3 inflammasome activation by mediating NLRP3 recruitment to mitochondria. This is Mitochondrial antiviral-signaling protein from Mus musculus (Mouse).